The following is a 63-amino-acid chain: Large ribosomal subunit protein bL28 (63 aa).

Belongs to the bacterial ribosomal protein bL28 family.

The chain is Large ribosomal subunit protein bL28 from Clostridium botulinum (strain ATCC 19397 / Type A).